The primary structure comprises 139 residues: uncharacterized protein (139 aa).

This is an uncharacterized protein from Invertebrate iridescent virus 3 (IIV-3).